Here is a 574-residue protein sequence, read N- to C-terminus: Proline--tRNA ligase (574 aa).

It belongs to the class-II aminoacyl-tRNA synthetase family. ProS type 1 subfamily. In terms of assembly, homodimer.

Its subcellular location is the cytoplasm. It carries out the reaction tRNA(Pro) + L-proline + ATP = L-prolyl-tRNA(Pro) + AMP + diphosphate. In terms of biological role, catalyzes the attachment of proline to tRNA(Pro) in a two-step reaction: proline is first activated by ATP to form Pro-AMP and then transferred to the acceptor end of tRNA(Pro). As ProRS can inadvertently accommodate and process non-cognate amino acids such as alanine and cysteine, to avoid such errors it has two additional distinct editing activities against alanine. One activity is designated as 'pretransfer' editing and involves the tRNA(Pro)-independent hydrolysis of activated Ala-AMP. The other activity is designated 'posttransfer' editing and involves deacylation of mischarged Ala-tRNA(Pro). The misacylated Cys-tRNA(Pro) is not edited by ProRS. The sequence is that of Proline--tRNA ligase from Aeromonas hydrophila subsp. hydrophila (strain ATCC 7966 / DSM 30187 / BCRC 13018 / CCUG 14551 / JCM 1027 / KCTC 2358 / NCIMB 9240 / NCTC 8049).